Reading from the N-terminus, the 197-residue chain is uncharacterized protein (197 aa).

The N-terminal stretch at 1-19 (MKLASLLVGSLMLAVPALA) is a signal peptide.

It localises to the secreted. This is an uncharacterized protein from Arthroderma benhamiae (strain ATCC MYA-4681 / CBS 112371) (Trichophyton mentagrophytes).